The chain runs to 644 residues: Protein cueball (644 aa).

An N-terminal signal peptide occupies residues 1–26; it reads MIRIRFGMDVLLVLLLATCLLSPTHG. Residues 27-531 are Extracellular-facing; sequence TPLEWDFAVT…VCLTPTVWTS (505 aa). N82 and N108 each carry an N-linked (GlcNAc...) asparagine glycan. LDL-receptor class B repeat units lie at residues 121–166, 167–211, and 212–257; these read TNLF…DVCR, RKLY…DQLS, and DRLF…TNDA. N-linked (GlcNAc...) asparagine glycans are attached at residues N175 and N190. An N-linked (GlcNAc...) asparagine glycan is attached at N313. 2 consecutive EGF-like domains span residues 398 to 430 and 433 to 471; these read EIRE…FTGE and EVSV…ARCE. 5 cysteine pairs are disulfide-bonded: C402–C411, C406–C421, C437–C447, C441–C459, and C461–C470. N473 and N508 each carry an N-linked (GlcNAc...) asparagine glycan. A helical membrane pass occupies residues 532 to 552; sequence SVIIILVVGIVSSLLLVAVIV. At 553–644 the chain is on the cytoplasmic side; it reads HGIRRLYKPK…LIHNMEDDLY (92 aa).

Belongs to the cueball family.

The protein resides in the cell membrane. In terms of biological role, has a role in spermatogenesis and oogenesis. This Drosophila yakuba (Fruit fly) protein is Protein cueball.